Here is a 285-residue protein sequence, read N- to C-terminus: Bis(5'-nucleosyl)-tetraphosphatase, symmetrical (285 aa).

The protein belongs to the Ap4A hydrolase family.

It catalyses the reaction P(1),P(4)-bis(5'-adenosyl) tetraphosphate + H2O = 2 ADP + 2 H(+). Functionally, hydrolyzes diadenosine 5',5'''-P1,P4-tetraphosphate to yield ADP. The sequence is that of Bis(5'-nucleosyl)-tetraphosphatase, symmetrical from Pseudomonas entomophila (strain L48).